Consider the following 79-residue polypeptide: Large ribosomal subunit protein uL24 (79 aa).

Belongs to the universal ribosomal protein uL24 family. Part of the 50S ribosomal subunit.

In terms of biological role, one of two assembly initiator proteins, it binds directly to the 5'-end of the 23S rRNA, where it nucleates assembly of the 50S subunit. Functionally, one of the proteins that surrounds the polypeptide exit tunnel on the outside of the subunit. The sequence is that of Large ribosomal subunit protein uL24 from Lactobacillus delbrueckii subsp. bulgaricus (strain ATCC 11842 / DSM 20081 / BCRC 10696 / JCM 1002 / NBRC 13953 / NCIMB 11778 / NCTC 12712 / WDCM 00102 / Lb 14).